Here is a 481-residue protein sequence, read N- to C-terminus: Protein JASON (481 aa).

The tract at residues 226-250 (ECDLDQSNSSNSSENGSSRKPEMGG) is disordered. The span at 232 to 241 (SNSSNSSENG) shows a compositional bias: low complexity.

Functionally, required for normal spindle orientation at male meiosis II and normal formation of tetrad of microspores. Acts as a positive regulator of PS1 in male sporogenesis. Not involved in female meiosis. This chain is Protein JASON, found in Arabidopsis thaliana (Mouse-ear cress).